The primary structure comprises 370 residues: MYIQSLALTSYRNYEHTELQFDNKVNVMIGENAQGKTNLMEAIYVLSMAKSHRTSNDKELIRWDQDYAKIEGRVIKKNGPLPMQLVISKKGKKGKVNHIEQQKLSHYVGALNTIMFAPEDLSLVKGSPQIRRRFLDMEIGQVSAVYLHDLSLYQKILSQRNHYLKQLQTRKQTDQAMLEVLTEQLIDAAAKVVKRRLTFTKQLEKWAQPLHFGISRELETLTLQYHTAIEVSEASDLSKIKNSYEESFQKLRDREIDRGVTLWGPHRDDLLFFVNGRDVQTYGSQGQQRTTALSLKLAEIDLIHEEIGEYPILLLDDVLSELDDYRQSHLLHTIQGRVQTFVTTTSVEGIDHATLKEAEIFRVASGKVID.

30-37 (GENAQGKT) contacts ATP.

The protein belongs to the RecF family.

It localises to the cytoplasm. Its function is as follows. The RecF protein is involved in DNA metabolism; it is required for DNA replication and normal SOS inducibility. RecF binds preferentially to single-stranded, linear DNA. It also seems to bind ATP. The protein is DNA replication and repair protein RecF of Bacillus pumilus (strain SAFR-032).